Consider the following 172-residue polypeptide: Adenine phosphoribosyltransferase (172 aa).

This sequence belongs to the purine/pyrimidine phosphoribosyltransferase family. In terms of assembly, homodimer.

The protein resides in the cytoplasm. It catalyses the reaction AMP + diphosphate = 5-phospho-alpha-D-ribose 1-diphosphate + adenine. The protein operates within purine metabolism; AMP biosynthesis via salvage pathway; AMP from adenine: step 1/1. Its function is as follows. Catalyzes a salvage reaction resulting in the formation of AMP, that is energically less costly than de novo synthesis. The chain is Adenine phosphoribosyltransferase from Streptococcus mutans serotype c (strain ATCC 700610 / UA159).